The primary structure comprises 384 residues: BarH-like 2 homeobox protein (384 aa).

Disordered stretches follow at residues 1–134, 154–237, and 364–384; these read MTAM…APRT, CAPY…TAFS, and PGGQ…PHPR. The segment covering 119–134 has biased composition (low complexity); the sequence is QSAAQQLGSAAAAPRT. A compositionally biased stretch (basic and acidic residues) spans 177 to 217; sequence ESFRPKLEQEDSKTKLDKREDSQSDIKCHGTKEEGDREITS. The homeobox DNA-binding region spans 229 to 288; it reads PRKARTAFSDHQLNQLERSFERQKYLSVQDRMDLAAALNLTDTQVKTWYQNRRTKWKRQT.

It belongs to the BAR homeobox family. In terms of tissue distribution, expressed in the ganglion cell layer of the retina in the eye and in the ventral zone of the dorsal thalamus of the CNS.

Its subcellular location is the nucleus. In terms of biological role, potential regulator of neural basic helix-loop-helix genes. It may down-regulate expression of ASCL1 and, within the thalamus, up-regulate NGN2, thereby regulating distinct patterns of neuronal differentiation. This is BarH-like 2 homeobox protein (Barhl2) from Rattus norvegicus (Rat).